Consider the following 887-residue polypeptide: Translation initiation factor IF-2 (887 aa).

3 disordered regions span residues Lys-31–Ile-87, Ser-94–Ala-113, and Val-129–Lys-285. Residues Ser-42–Lys-59 are compositionally biased toward basic and acidic residues. Basic and acidic residues-rich tracts occupy residues Val-150 to Pro-171 and Pro-199 to Lys-212. Over residues Thr-213–Asp-223 the composition is skewed to low complexity. The span at Tyr-241 to Gly-273 shows a compositional bias: basic and acidic residues. One can recognise a tr-type G domain in the interval Thr-393–Lys-562. The segment at Gly-402 to Thr-409 is G1. Gly-402 to Thr-409 contacts GTP. A G2 region spans residues Ala-427–His-431. The segment at Asp-448–Gly-451 is G3. Residues Asp-448–His-452 and Asn-502–Asp-505 each bind GTP. Residues Asn-502–Asp-505 form a G4 region. The segment at Ser-538–Lys-540 is G5.

This sequence belongs to the TRAFAC class translation factor GTPase superfamily. Classic translation factor GTPase family. IF-2 subfamily.

It is found in the cytoplasm. Functionally, one of the essential components for the initiation of protein synthesis. Protects formylmethionyl-tRNA from spontaneous hydrolysis and promotes its binding to the 30S ribosomal subunits. Also involved in the hydrolysis of GTP during the formation of the 70S ribosomal complex. This Chlamydia caviae (strain ATCC VR-813 / DSM 19441 / 03DC25 / GPIC) (Chlamydophila caviae) protein is Translation initiation factor IF-2.